We begin with the raw amino-acid sequence, 568 residues long: Nucleolar protein 58 (568 aa).

The region spanning 293–417 is the Nop domain; that stretch reads IAPNLTALVG…LESRLRALEH (125 aa). Residues 430–568 are disordered; that stretch reads ANGQQGRQQP…KKKKKKKKDE (139 aa). The span at 471 to 482 shows a compositional bias: basic and acidic residues; it reads EEVKEEKDEKKD. Residues 522-533 are compositionally biased toward basic residues; the sequence is RKEAKKAAKAAK. Positions 534–544 are enriched in basic and acidic residues; the sequence is KAAEESGDGDK.

Belongs to the NOP5/NOP56 family.

It is found in the nucleus. Its subcellular location is the nucleolus. In terms of biological role, required for pre-18S rRNA processing. May bind microtubules. This is Nucleolar protein 58 (NOP58) from Cryptococcus neoformans var. neoformans serotype D (strain JEC21 / ATCC MYA-565) (Filobasidiella neoformans).